Reading from the N-terminus, the 212-residue chain is Uridine kinase (212 aa).

13–20 (GASASGKS) lines the ATP pocket.

The protein belongs to the uridine kinase family.

The protein resides in the cytoplasm. The enzyme catalyses uridine + ATP = UMP + ADP + H(+). It carries out the reaction cytidine + ATP = CMP + ADP + H(+). Its pathway is pyrimidine metabolism; CTP biosynthesis via salvage pathway; CTP from cytidine: step 1/3. It functions in the pathway pyrimidine metabolism; UMP biosynthesis via salvage pathway; UMP from uridine: step 1/1. In Shewanella piezotolerans (strain WP3 / JCM 13877), this protein is Uridine kinase.